A 280-amino-acid polypeptide reads, in one-letter code: MSINLQNVSYTYQVGTPFEGRALFNINLDILDGSYTAFIGHTGSGKSTIMQLLNGLHVPTTGIVSVDKQDITNHSKNKEIKSIRKHVGLVFQFPESQLFEETVLKDVAFGPQNFGISPEEAEALAREKLALVGISENLFEKNPFELSGGQMRRVAIAGILAMQPKVLVLDEPTAGLDPKGRKELMTIFKKLHQSGMTIVLVTHLMDDVANYADFVYVLDKGKIILSGKPKTIFQQVSLLEKKQLGVPKVTKLAQRLVDRGIPISSLPITLEELREVLKHG.

The ABC transporter domain maps to Ile3–Gly245. ATP is bound at residue Gly40–Ser47.

This sequence belongs to the ABC transporter superfamily. Energy-coupling factor EcfA family. In terms of assembly, forms a stable energy-coupling factor (ECF) transporter complex composed of 2 membrane-embedded substrate-binding proteins (S component), 2 ATP-binding proteins (A component) and 2 transmembrane proteins (T component).

The protein resides in the cell membrane. In terms of biological role, ATP-binding (A) component of a common energy-coupling factor (ECF) ABC-transporter complex. Unlike classic ABC transporters this ECF transporter provides the energy necessary to transport a number of different substrates. The sequence is that of Energy-coupling factor transporter ATP-binding protein EcfA2 from Streptococcus pyogenes serotype M3 (strain ATCC BAA-595 / MGAS315).